The chain runs to 281 residues: MRITIRDIQQMRDRGERIPMVTAYDYTSAQIADRAGIPLILVGDSLGMVVLGYNSTVPVTLDDMIHHTRAVVRGTQKALVIGDLPFLTYTSPEQAMQSAGRMLQEAGAQAVKLEGGVHIAPTIARLVQAGIPVMGHIGFTPQAVNQIGLRVQGRRAAEAQRLLADALAVQEAGAFAIVLELVPAELAQAITERLRIPTIGIGAGAGCSGQVQVWHDMLGLYSDFLPRHAKRYADLATIIAEALSQYASDVRNGTFPGPEHSSRMDPAELAAALGSQDQATE.

Positions 44 and 83 each coordinate Mg(2+). 3-methyl-2-oxobutanoate contacts are provided by residues 44–45, Asp83, and Lys112; that span reads DS. Glu114 is a binding site for Mg(2+). The active-site Proton acceptor is Glu180. The disordered stretch occupies residues 251 to 281; the sequence is RNGTFPGPEHSSRMDPAELAAALGSQDQATE.

Belongs to the PanB family. In terms of assembly, homodecamer; pentamer of dimers. The cofactor is Mg(2+).

The protein localises to the cytoplasm. It carries out the reaction 3-methyl-2-oxobutanoate + (6R)-5,10-methylene-5,6,7,8-tetrahydrofolate + H2O = 2-dehydropantoate + (6S)-5,6,7,8-tetrahydrofolate. It participates in cofactor biosynthesis; (R)-pantothenate biosynthesis; (R)-pantoate from 3-methyl-2-oxobutanoate: step 1/2. Catalyzes the reversible reaction in which hydroxymethyl group from 5,10-methylenetetrahydrofolate is transferred onto alpha-ketoisovalerate to form ketopantoate. This chain is 3-methyl-2-oxobutanoate hydroxymethyltransferase, found in Chloroflexus aurantiacus (strain ATCC 29364 / DSM 637 / Y-400-fl).